Here is a 123-residue protein sequence, read N- to C-terminus: Putative oocyte-secreted protein 1 homolog (123 aa).

The N-terminal stretch at 1 to 26 is a signal peptide; the sequence is MKTILGFKGLFYLHSLIWTCAGDWSA.

The protein belongs to the PLAC1 family.

It localises to the secreted. Functionally, may be involved in cell differentiation. The protein is Putative oocyte-secreted protein 1 homolog (OOSP1) of Homo sapiens (Human).